A 254-amino-acid polypeptide reads, in one-letter code: PF03932 family protein CutC (254 aa).

This sequence belongs to the CutC family.

The protein resides in the cytoplasm. This is PF03932 family protein CutC from Yersinia pestis bv. Antiqua (strain Angola).